The sequence spans 653 residues: MDRGVLPLPITLLFVIYSFVPTTGLAERVGCDLQPVDPTRGEVTFTTSQVSEGCVAQAANAVREVHVLFLDFPGMLSHLELTLQASKQNGTETQEVFLVLVSNKNVFVKFQAPEIPLHLAYDSSLVIFQGQPRVNITVLPSLTSRKQILDWAATKGAITSIAALDDPQSIVLQLGQDPKAPFLCLPEAHKDMGATLEWQPRAQTPVQSCRLEGVSGHKEAYILRILPGSEAGPRTVTVMMELSCTSGDAILILHGPPYVSWFIDINHSMQILTTGEYSVKIFPGSKVKGVELPDTPQGLIAEARKLNASIVTSFVELPLVSNVSLRASSCGGVFQTTPAPVVTTPPKDTCSPVLLMSLIQPKCGNQVMTLALNKKHVQTLQCTITGLTFWDSSCQAEDTDDHLVLSSAYSSCGMKVTAHVVSNEVIISFPSGSPPLRKKVQCIDMDSLSFQLGLYLSPHFLQASNTIELGQQAFVQVSVSPLTSEVTVQLDSCHLDLGPEGDMVELIQSRTAKGSCVTLLSPSPEGDPRFSFLLRVYMVPTPTAGTLSCNLALRPSTLSQEVYKTVSMRLNIVSPDLSGKGLVLPSVLGITFGAFLIGALLTAALWYIYSHTRGPSKREPVVAVAAPASSESSSTNHSIGSTQSTPCSTSSMA.

The N-terminal stretch at 1 to 26 (MDRGVLPLPITLLFVIYSFVPTTGLA) is a signal peptide. An OR1, N-terminal part region spans residues 27 to 47 (ERVGCDLQPVDPTRGEVTFTT). Positions 27 to 337 (ERVGCDLQPV…SSCGGVFQTT (311 aa)) are required for interaction with GDF2. Residues 27 to 581 (ERVGCDLQPV…IVSPDLSGKG (555 aa)) are Extracellular-facing. 7 disulfide bridges follow: Cys-31–Cys-209, Cys-54–Cys-184, Cys-244–Cys-330, Cys-350–Cys-382, Cys-363–Cys-442, Cys-394–Cys-412, and Cys-493–Cys-549. Residues 48–201 (SQVSEGCVAQ…MGATLEWQPR (154 aa)) form an OR2 region. N-linked (GlcNAc...) asparagine glycosylation is found at Asn-89, Asn-135, and Asn-266. Positions 202–330 (AQTPVQSCRL…SNVSLRASSC (129 aa)) are OR1, C-terminal part. An essential for interaction with GDF2 region spans residues 270–282 (QILTTGEYSVKIF). Residues Asn-307 and Asn-322 are each glycosylated (N-linked (GlcNAc...) asparagine). In terms of domain architecture, ZP spans 363–510 (CGNQVMTLAL…GDMVELIQSR (148 aa)). Residues 582–606 (LVLPSVLGITFGAFLIGALLTAALW) form a helical membrane-spanning segment. At 607–653 (YIYSHTRGPSKREPVVAVAAPASSESSSTNHSIGSTQSTPCSTSSMA) the chain is on the cytoplasmic side. Over residues 624-634 (VAAPASSESSS) the composition is skewed to low complexity. A disordered region spans residues 624–653 (VAAPASSESSSTNHSIGSTQSTPCSTSSMA). The segment covering 635 to 653 (TNHSIGSTQSTPCSTSSMA) has biased composition (polar residues). 2 positions are modified to phosphoserine; by TGFBR1: Ser-641 and Ser-644.

Homodimer; disulfide-linked. Forms a heteromeric complex with the signaling receptors for transforming growth factor-beta: TGFBR1 and/or TGFBR2. Interacts with TGFB1. It is able to bind TGFB1 and TGFB2 with high affinity, but not TGFB3. Interacts with GDF2, forming a heterotetramer with a 2:2 stoichiometry. Interacts with ACVRL1. Can form a heteromeric complex with GDF2 and ACVRL1. Interacts with BMP10. Interacts with DYNLT4. Interacts with ARRB2. As to expression, detected on blood vessels (at protein level). Detected on adult pulmonary artery, capillaries supporting the heart muscle and lung alveolar capillary endothelial cells. Endoglin is restricted to endothelial cells in all tissues except bone marrow and is also found in stromal cells within the connective tissue of intestine, stomach, heart, skeletal muscle, uterus, ovary, oviduct, testis and thymus.

The protein resides in the cell membrane. Its function is as follows. Vascular endothelium glycoprotein that plays an important role in the regulation of angiogenesis. Required for normal structure and integrity of adult vasculature. Regulates the migration of vascular endothelial cells. Required for normal extraembryonic angiogenesis and for embryonic heart development. May regulate endothelial cell shape changes in response to blood flow, which drive vascular remodeling and establishment of normal vascular morphology during angiogenesis. May play a role in the binding of endothelial cells to integrins. Acts as a TGF-beta coreceptor and is involved in the TGF-beta/BMP signaling cascade that ultimately leads to the activation of SMAD transcription factors. Required for GDF2/BMP9 signaling through SMAD1 in endothelial cells and modulates TGFB1 signaling through SMAD3. This is Endoglin (Eng) from Mus musculus (Mouse).